Consider the following 75-residue polypeptide: CLAVATA3/ESR (CLE)-related protein 33 (75 aa).

Residues M1–A22 form the signal peptide. 2 positions are modified to hydroxyproline: P67 and P70. The O-linked (Ara...) hydroxyproline glycan is linked to P70.

It belongs to the CLV3/ESR signal peptide family. In terms of processing, the O-glycosylation (arabinosylation) of the hydroxyproline Pro-70 enhances binding affinity of the CLE33p peptide for its receptor. Expressed in root vasculature.

The protein resides in the secreted. It is found in the extracellular space. Its function is as follows. Signaling peptide involved in the regulation of root colonization by arbuscular mycorrhizal (AM) fungi. Moves from root to shoot to function with the receptor kinase SUNN, in a signaling pathway that repress strigolactone biosynthetic genes and strigolactone content in the roots, and consequently reduces the promotion of further colonization by AM fungi. The polypeptide is CLAVATA3/ESR (CLE)-related protein 33 (Medicago truncatula (Barrel medic)).